The primary structure comprises 292 residues: T-box transcription factor tbx-9 (292 aa).

The T-box DNA-binding region spans 10-194 (GSQETLWKIF…HNSFAKGFRD (185 aa)). Disordered stretches follow at residues 192-227 (FRDG…EVAP) and 265-292 (STPS…DIVG). Low complexity-rich tracts occupy residues 204–223 (PSYS…RSPP) and 265–275 (STPSSSSSELS). Positions 280–292 (EDQEVEEDIDIVG) are enriched in acidic residues.

The protein localises to the nucleus. Its function is as follows. Transcription factor. Involved in the control of early morphogenesis of the intestine, hypodermis and body-wall muscle. Involved in regulating expression of vab-7. Appears to have partially redundant function to tbx-8. Positively modulates expression of homeobox protein lin-39, perhaps by binding to regulatory regions of the lin-39 gene, acting in the vulval lineage. The protein is T-box transcription factor tbx-9 (tbx-9) of Caenorhabditis elegans.